The sequence spans 372 residues: Aminodeoxyfutalosine synthase (372 aa).

Positions 53-292 (HKTYFVHSIR…VARLYLDNFP (240 aa)) constitute a Radical SAM core domain. 3 residues coordinate [4Fe-4S] cluster: C69, C73, and C76.

This sequence belongs to the radical SAM superfamily. MqnE family. The cofactor is [4Fe-4S] cluster.

The catalysed reaction is 3-[(1-carboxyvinyl)-oxy]benzoate + S-adenosyl-L-methionine + H2O = 6-amino-6-deoxyfutalosine + hydrogencarbonate + L-methionine + H(+). Its pathway is quinol/quinone metabolism; menaquinone biosynthesis. In terms of biological role, radical SAM enzyme that catalyzes the addition of the adenosyl radical to the double bond of 3-[(1-carboxyvinyl)oxy]benzoate, leading to aminodeoxyfutalosine (AFL), a key intermediate in the formation of menaquinone (MK, vitamin K2) from chorismate. In Thermus thermophilus (strain ATCC 27634 / DSM 579 / HB8), this protein is Aminodeoxyfutalosine synthase.